We begin with the raw amino-acid sequence, 1243 residues long: Serine/threonine-protein kinase WNK4 (1243 aa).

A compositionally biased stretch (polar residues) spans 1–17; sequence MLASPATETTVLMSQTE. A disordered region spans residues 1–142; the sequence is MLASPATETT…GPGSREPLRV (142 aa). Low complexity predominate over residues 65–77; it reads VDLGLLSSWSLPA. The span at 78–103 shows a compositional bias: pro residues; that stretch reads SPAPDPPDPPDSAGPGPARSPPPSSK. Residue Ser97 is modified to Phosphoserine. Over residues 118-127 the composition is skewed to basic and acidic residues; that stretch reads AAEDSARPEL. Residues Lys157 and Lys175 each participate in a glycyl lysine isopeptide (Lys-Gly) (interchain with G-Cter in ubiquitin) cross-link. A Protein kinase domain is found at 174-432; it reads LKFDIEIGRG…IQDLLAHAFF (259 aa). Ser184 lines the ATP pocket. Residues Lys186, Lys226, and Lys241 each participate in a glycyl lysine isopeptide (Lys-Gly) (interchain with G-Cter in ubiquitin) cross-link. Residues 254–257 and Lys304 each bind ATP; that span reads TELM. Residue Asp321 is the Proton acceptor of the active site. Lys328 is covalently cross-linked (Glycyl lysine isopeptide (Lys-Gly) (interchain with G-Cter in ubiquitin)). Phosphoserine; by autocatalysis occurs at positions 331 and 335. Glycyl lysine isopeptide (Lys-Gly) (interchain with G-Cter in ubiquitin) cross-links involve residues Lys387, Lys393, Lys450, and Lys454. The interval 526-564 is disordered; that stretch reads KARELEALPPEPGPPPATVPMAPGPPSVFPPEPEEPEAD. Residues 534–556 are compositionally biased toward pro residues; it reads PPEPGPPPATVPMAPGPPSVFPP. The tract at residues 557–567 is interaction with KLHL3; that stretch reads EPEEPEADQHQ. A Phosphoserine modification is found at Ser575. The segment covering 630 to 641 has biased composition (low complexity); the sequence is SGPGSDFSPGDS. Disordered stretches follow at residues 630 to 683, 751 to 871, and 943 to 1110; these read SGPG…SVSD, DTGP…STPE, and SPSP…SPVW. The span at 663 to 676 shows a compositional bias: basic residues; it reads PPGRNLRRRPRSRL. Residues 767–780 show a composition bias toward pro residues; that stretch reads EPAPLPALPVPLPD. Positions 797–812 are enriched in low complexity; the sequence is WTAFSTSSSSPGTPLS. Residues 822 to 843 show a composition bias toward pro residues; the sequence is PISPGPIFPITSPPCHPSPSPF. Low complexity-rich tracts occupy residues 844-854, 862-871, and 943-952; these read SPISSQVSSNP, PLPFSSSTPE, and SPSPGLLSQS. Pro residues predominate over residues 953-970; the sequence is PPAPPSPLPSLPLPPPVA. Lys1010 participates in a covalent cross-link: Glycyl lysine isopeptide (Lys-Gly) (interchain with G-Cter in ubiquitin). An RFXV motif motif is present at residues 1016 to 1019; sequence RFQV. Ser1035 bears the Phosphoserine mark. The segment covering 1065-1077 has biased composition (basic and acidic residues); that stretch reads ETREALAESDRAA. Residues Lys1144, Lys1157, and Lys1158 each participate in a glycyl lysine isopeptide (Lys-Gly) (interchain with G-Cter in ubiquitin) cross-link. Positions 1166 to 1243 are disordered; sequence RLGKQPPPGI…VTFAGDVGRM (78 aa). 2 stretches are compositionally biased toward polar residues: residues 1193–1204 and 1216–1228; these read SFPTSRRNSLQR and NSLS…SQEQ. Ser1217 bears the Phosphoserine mark.

Belongs to the protein kinase superfamily. Ser/Thr protein kinase family. WNK subfamily. Interacts with the C-terminal region of KCNJ1. The cofactor is Mg(2+). Autophosphorylated at Ser-331 and Ser-335, promoting its activation. Phosphorylated by WNK1 and WNK3. Phosphorylated at Ser-575 in a MAP3K15/ASK3-dependent process in response to osmotic stress or hypotonic low-chloride stimulation. Post-translationally, ubiquitinated by the BCR(KLHL3) complex, leading to its degradation. Also ubiquitinated by the BCR(KLHL2) complex. Expressed in kidney, colon and skin.

It localises to the cell junction. The protein localises to the tight junction. The catalysed reaction is L-seryl-[protein] + ATP = O-phospho-L-seryl-[protein] + ADP + H(+). The enzyme catalyses L-threonyl-[protein] + ATP = O-phospho-L-threonyl-[protein] + ADP + H(+). Activation requires autophosphorylation of Ser-331 and Ser-335. Autophosphorylation and subsequent activation is inhibited by increases in intracellular ionic strength: Cl(-) potently inhibits WNK4 kinase activity via direct binding. Also inhibited by K(+) ions. Its function is as follows. Serine/threonine-protein kinase component of the WNK4-SPAK/OSR1 kinase cascade, which acts as a key regulator of ion transport in the distal nephron and blood pressure. The WNK4-SPAK/OSR1 kinase cascade is composed of WNK4, which mediates phosphorylation and activation of downstream kinases OXSR1/OSR1 and STK39/SPAK. Following activation, OXSR1/OSR1 and STK39/SPAK catalyze phosphorylation of ion cotransporters, such as SLC12A1/NKCC2, SLC12A2/NKCC1, SLC12A3/NCC, SLC12A5/KCC2 or SLC12A6/KCC3, regulating their activity. Acts as a molecular switch that regulates the balance between renal salt reabsorption and K(+) secretion by modulating the activities of renal transporters and channels, including the Na-Cl cotransporter SLC12A3/NCC and the K(+) channel, KCNJ1/ROMK. Regulates NaCl reabsorption in the distal nephron by activating the thiazide-sensitive Na-Cl cotransporter SLC12A3/NCC in distal convoluted tubule cells of kidney: activates SLC12A3/NCC in a OXSR1/OSR1- and STK39/SPAK-dependent process. Also acts as a scaffold protein independently of its protein kinase activity: negatively regulates cell membrane localization of various transporters and channels (CFTR, KCNJ1/ROMK, SLC4A4, SLC26A9 and TRPV4) by clathrin-dependent endocytosis. Also inhibits the activity of the epithelial Na(+) channel (ENaC) SCNN1A, SCNN1B, SCNN1D in a inase-independent mechanism. May also phosphorylate NEDD4L. This chain is Serine/threonine-protein kinase WNK4, found in Homo sapiens (Human).